The chain runs to 635 residues: Threonine--tRNA ligase (635 aa).

One can recognise a TGS domain in the interval 1–61 (MVSIRLPDGS…DHDVALAIVT (61 aa)). The catalytic stretch occupies residues 242-533 (DHRKLGKQLD…LIEHHAGAMP (292 aa)). Zn(2+)-binding residues include C333, H384, and H510.

Belongs to the class-II aminoacyl-tRNA synthetase family. In terms of assembly, homodimer. Requires Zn(2+) as cofactor.

It localises to the cytoplasm. It catalyses the reaction tRNA(Thr) + L-threonine + ATP = L-threonyl-tRNA(Thr) + AMP + diphosphate + H(+). Functionally, catalyzes the attachment of threonine to tRNA(Thr) in a two-step reaction: L-threonine is first activated by ATP to form Thr-AMP and then transferred to the acceptor end of tRNA(Thr). Also edits incorrectly charged L-seryl-tRNA(Thr). This is Threonine--tRNA ligase from Paraburkholderia xenovorans (strain LB400).